The chain runs to 301 residues: Single-stranded DNA-binding protein (301 aa).

The interval lysine 3–threonine 7 is LAST. Zn(2+) contacts are provided by histidine 64, cysteine 77, cysteine 87, and cysteine 90. The disordered stretch occupies residues threonine 272–leucine 301. A compositionally biased stretch (low complexity) spans methionine 279–alanine 289. Positions aspartate 290–leucine 301 are enriched in acidic residues.

The protein belongs to the Tequatrovirus single-stranded DNA-binding protein family. Homodimer in the absence of DNA, monomer when binding DNA. Interacts with the DNA helicase assembly protein; a ternary complex between the helicase assembly protein, the single-stranded DNA-binding protein and ssDNA is an obligatory intermediate in the helicase loading mechanism. Part of the replicase complex that includes the DNA polymerase, the polymerase clamp, the clamp loader complex, the single-stranded DNA binding protein, the primase, the DnaB-like SF4 replicative helicase and the helicase assembly factor. Interacts (via C-terminus) with the viral SF1 dDA helicase. Interacts with the viral SF2 UvsW repair helicase.

In terms of biological role, single-stranded DNA-binding protein that participates in viral DNA replication, recombination, and repair. Coats the lagging-strand ssDNA as the replication fork advances. Stimulates the activities of viral DNA polymerase and DnaB-like SF4 replicative helicase, probably via its interaction with the helicase assembly factor. Stimulates the unwinding activity of UvsW helicase, inhibits it DNA winding activity. Together with DnaB-like SF4 replicative helicase and the helicase assembly factor, promotes pairing of two homologous DNA molecules containing complementary single-stranded regions and mediates homologous DNA strand exchange. Also promotes the formation of joint molecules. mRNA specific autogenous translational repressor. The sequence is that of Single-stranded DNA-binding protein from Escherichia coli (Bacteriophage T4).